The primary structure comprises 359 residues: 3-dehydroquinate synthase (359 aa).

Belongs to the archaeal-type DHQ synthase family.

It carries out the reaction 2-amino-2,3,7-trideoxy-D-lyxo-hept-6-ulosonate + NAD(+) + H2O = 3-dehydroquinate + NH4(+) + NADH + H(+). Functionally, catalyzes the oxidative deamination and cyclization of 2-amino-3,7-dideoxy-D-threo-hept-6-ulosonic acid (ADH) to yield 3-dehydroquinate (DHQ), which is fed into the canonical shikimic pathway of aromatic amino acid biosynthesis. The polypeptide is 3-dehydroquinate synthase (Methanosphaera stadtmanae (strain ATCC 43021 / DSM 3091 / JCM 11832 / MCB-3)).